The primary structure comprises 358 residues: Histidinol-phosphate aminotransferase (358 aa).

An N6-(pyridoxal phosphate)lysine modification is found at Lys210.

This sequence belongs to the class-II pyridoxal-phosphate-dependent aminotransferase family. Histidinol-phosphate aminotransferase subfamily. As to quaternary structure, homodimer. Pyridoxal 5'-phosphate is required as a cofactor.

The enzyme catalyses L-histidinol phosphate + 2-oxoglutarate = 3-(imidazol-4-yl)-2-oxopropyl phosphate + L-glutamate. Its pathway is amino-acid biosynthesis; L-histidine biosynthesis; L-histidine from 5-phospho-alpha-D-ribose 1-diphosphate: step 7/9. This Clostridium beijerinckii (strain ATCC 51743 / NCIMB 8052) (Clostridium acetobutylicum) protein is Histidinol-phosphate aminotransferase.